A 264-amino-acid chain; its full sequence is Sec-independent protein translocase protein TatC (264 aa).

The next 6 membrane-spanning stretches (helical) occupy residues 20 to 40, 85 to 105, 131 to 151, 175 to 195, 211 to 231, and 232 to 252; these read VVVI…EPAE, FFAQ…PVAV, AVGL…PYIL, FVLQ…VMFA, IRYA…DGSG, and VTMW…MFFA.

It belongs to the TatC family. As to quaternary structure, forms a complex with TatA.

It is found in the cell membrane. Its function is as follows. Part of the twin-arginine translocation (Tat) system that transports large folded proteins containing a characteristic twin-arginine motif in their signal peptide across membranes. This Cenarchaeum symbiosum (strain A) protein is Sec-independent protein translocase protein TatC.